The sequence spans 251 residues: MKRIVVKVGSHVISEENTLSFERLKNLVAFLAKLMEKYEVILVTSAAISAGHTKLDIDRKNLINKQVLAAIGQPFLISVYNELLAKFNKLGGQILLTGKDFDSRKATKHAKNAIDMMINLGILPIINENDATAIEEIVFGDNDSLSAYATHFFDADLLVILSDIDGFYDKNPSEFSDAKRLEKITHIKEEWLQATIKTGSEHGTGGIVTKLKAAKFLLEHNKKMFLASGFDLSVAKTFLLEDKQIGGTLFE.

K7 contacts ATP. 3 residues coordinate substrate: S45, D130, and N142. Residues 162-163 (SD) and 204-210 (TGGIVTK) each bind ATP.

This sequence belongs to the glutamate 5-kinase family.

It localises to the cytoplasm. It catalyses the reaction L-glutamate + ATP = L-glutamyl 5-phosphate + ADP. It functions in the pathway amino-acid biosynthesis; L-proline biosynthesis; L-glutamate 5-semialdehyde from L-glutamate: step 1/2. In terms of biological role, catalyzes the transfer of a phosphate group to glutamate to form L-glutamate 5-phosphate. In Campylobacter jejuni subsp. jejuni serotype O:6 (strain 81116 / NCTC 11828), this protein is Glutamate 5-kinase.